Reading from the N-terminus, the 208-residue chain is Methylthioribulose-1-phosphate dehydratase (208 aa).

2 residues coordinate Zn(2+): histidine 101 and histidine 103.

The protein belongs to the aldolase class II family. MtnB subfamily. Zn(2+) is required as a cofactor.

It carries out the reaction 5-(methylsulfanyl)-D-ribulose 1-phosphate = 5-methylsulfanyl-2,3-dioxopentyl phosphate + H2O. The protein operates within amino-acid biosynthesis; L-methionine biosynthesis via salvage pathway; L-methionine from S-methyl-5-thio-alpha-D-ribose 1-phosphate: step 2/6. Its function is as follows. Catalyzes the dehydration of methylthioribulose-1-phosphate (MTRu-1-P) into 2,3-diketo-5-methylthiopentyl-1-phosphate (DK-MTP-1-P). The chain is Methylthioribulose-1-phosphate dehydratase from Gluconobacter oxydans (strain 621H) (Gluconobacter suboxydans).